We begin with the raw amino-acid sequence, 67 residues long: Small, acid-soluble spore protein B (67 aa).

Belongs to the alpha/beta-type SASP family.

Its function is as follows. SASP are bound to spore DNA. They are double-stranded DNA-binding proteins that cause DNA to change to an a-like conformation. They protect the DNA backbone from chemical and enzymatic cleavage and are thus involved in dormant spore's high resistance to UV light. The protein is Small, acid-soluble spore protein B (sspB) of Bacillus subtilis (strain 168).